The following is a 519-amino-acid chain: Cytochrome P450 72C1 (519 aa).

The chain crosses the membrane as a helical span at residues 10 to 30; it reads VFLIGFLILILNWVWRAVNWV. A heme-binding site is contributed by Cys-467.

The protein belongs to the cytochrome P450 family. Requires heme as cofactor. As to expression, expressed in hypocotyls, roots, cotyledons, stamens and silique junctions.

It localises to the membrane. Its function is as follows. Atypical cytochrome P450 involved in brassinosteroids (BRs) inactivation and regulation of BRs homeostasis. Does not possess carbon 26 hydroxylase activity and may inactivate BRs by hydroxylation of carbons other than C-26. Acts in association with CYP734A1 to inactivate BRs and modulate photomorphogenesis. The sequence is that of Cytochrome P450 72C1 (CYP72C1) from Arabidopsis thaliana (Mouse-ear cress).